The chain runs to 224 residues: Urease accessory protein UreF (224 aa).

The protein belongs to the UreF family. UreD, UreF and UreG form a complex that acts as a GTP-hydrolysis-dependent molecular chaperone, activating the urease apoprotein by helping to assemble the nickel containing metallocenter of UreC. The UreE protein probably delivers the nickel.

The protein resides in the cytoplasm. Required for maturation of urease via the functional incorporation of the urease nickel metallocenter. The sequence is that of Urease accessory protein UreF from Azotobacter vinelandii (strain DJ / ATCC BAA-1303).